The chain runs to 277 residues: Basic leucine zipper 9 (277 aa).

Residues 73–141 are disordered; the sequence is ADSPVSANKP…ESAKRSRRRK (69 aa). Ser100 is modified (phosphoserine). Positions 109–118 are enriched in polar residues; that stretch reads AGQSEMTNDP. A bZIP domain is found at 120–183; it reads DLKRIRRMNS…RSAGTNNRVL (64 aa). Residues 122 to 141 are basic motif; it reads KRIRRMNSNRESAKRSRRRK. Residues 124 to 131 carry the Nuclear localization signal motif; it reads IRRMNSNR. The interval 148 to 162 is leucine-zipper; it reads LETQVDSLKGDNSTL.

It belongs to the bZIP family. As to quaternary structure, homodimer. Interacts with BZIP1, BZIP2, BZIP10, BZIP11, BZIP25, BZIP44, BZIP53 and BZIP63. In terms of processing, phosphorylated. Expressed in roots, shoots, stems, young leaves, and flowers, mostly in vascular tissues (e.g. phloem).

It is found in the nucleus. In terms of biological role, transcription factor. The polypeptide is Basic leucine zipper 9 (BZIP9) (Arabidopsis thaliana (Mouse-ear cress)).